Consider the following 574-residue polypeptide: Fusion glycoprotein F0 (574 aa).

A signal peptide spans 1–25; sequence MELLIHRLSAIFLTLAINALYLTSS. At 26–524 the chain is on the extracellular side; that stretch reads QNITEEFYQS…NVNTGKSTTN (499 aa). Asn-27 and Asn-70 each carry an N-linked (GlcNAc...) asparagine; by host glycan. Disulfide bonds link Cys-37–Cys-439, Cys-69–Cys-212, Cys-313–Cys-343, Cys-322–Cys-333, Cys-358–Cys-367, Cys-382–Cys-393, and Cys-416–Cys-422. Positions 76–96 form a coiled coil; that stretch reads VKLIKQELDKYKNAVTELQLL. N-linked (GlcNAc...) asparagine; by host glycans are attached at residues Asn-116, Asn-120, and Asn-126. The tract at residues 137–157 is fusion peptide; it reads FLGFLLGVGSAIASGIAVSKV. Residues 158-209 are a coiled coil; sequence LHLEGEVNKIKNALLSTNKAVVSLSNGVSVLTSKVLDLKNYINNQLLPIVNQ. Residues 481 to 516 adopt a coiled-coil conformation; the sequence is LVFPSDEFDASISQVNEKINQSLAFIRRSDELLHNV. N-linked (GlcNAc...) asparagine; by host glycosylation is present at Asn-500. The chain crosses the membrane as a helical span at residues 525–550; the sequence is IMITTIIIVIIVVLLSLIAIGLLLYC. Residue Cys-550 is the site of S-palmitoyl cysteine; by host attachment. The Cytoplasmic segment spans residues 551 to 574; that stretch reads KAKNTPVTLSKDQLSGINNIAFSK.

It belongs to the paramyxoviruses fusion glycoprotein family. In terms of assembly, homotrimer. Heterodimer with fusion protein F2; disulfide-linked. Interacts with host NCL; this interaction plays a role in viral entry into the host cell. As a heterodimer with F2, interacts with host heparan sulfate. As a heterodimer with F2, interacts with host IGF1R; this interaction activates PRKCZ/PKCzeta that recruits NCL/nucleolin from the host nucleus to the plasma membrane. Part of a complex composed of F1, F2 and G glycoproteins. As a heterodimer with F2, interacts with host RHOA; this interaction facilitates virus-induced syncytium formation. Homotrimer. Heterodimer with fusion protein F1; disulfide-linked. As a heterodimer with F1, interacts with host heparan sulfate. As a heterodimer with F1, interacts with host IGF1R; this interaction activates PRKCZ/PKCzeta that recruits NCL/nucleolin from the host nucleus to the plasma membrane. Part of a complex composed of F1, F2 and G glycoproteins. As a heterodimer with F1, interacts with host RHOA; this interaction facilitates virus-induced syncytium formation. In terms of processing, the F glycoprotein is synthesized as a F0 inactive precursor that is heavily N-glycosylated and processed at two sites by a host furin-like protease probably in the Golgi. The cleavage site between p27 and F1 may occur after endocytosis to yield the mature F1 and F2 proteins. Both cleavages are required for membrane fusion and p27 is released from the processed protein.

It is found in the host Golgi apparatus membrane. The protein localises to the virion membrane. It localises to the host cell membrane. Inactive precursor that is cleaved at two sites by a furin-like protease to give rise to the mature F1 and F2 fusion glycoproteins. Its function is as follows. Class I viral fusion protein. Under the current model, the protein has at least 3 conformational states: pre-fusion native state, pre-hairpin intermediate state, and post-fusion hairpin state. During viral and plasma cell membrane fusion, the coiled coil regions assume a trimer-of-hairpins structure, positioning the fusion peptide in close proximity to the C-terminal region of the ectodomain. The formation of this structure appears to drive apposition and subsequent fusion of viral and cellular membranes leading to delivery of the nucleocapsid into the cytoplasm. This fusion is pH independent and occurs at the plasma or endosomal membrane. The trimer of F1-F2 (F protein) also facilitates the attachment to host cell by binding to host heparan sulfate. F protein is involved in the entry into the host cell through the interaction with host IGF1R. This interaction activates PRKCZ/PKCzeta that recruits host NCL/nucleolin to the apical cell surface where it can bind fusion glycoprotein F1. Later in infection, F protein expressed at the plasma membrane of infected cells can mediate fusion with adjacent cells to form syncytia, a cytopathic effect that could lead to tissue necrosis. F protein may trigger p53-dependent apoptosis. Functionally, major determinant of the species specificity of RSV infection. The trimer of F1-F2 (F protein) also facilitates the attachment to host cell by binding to host heparan sulfate. F protein is involved in the entry into the host cell through the interaction with host IGF1R. This interaction activates PRKCZ/PKCzeta that recruits host NCL/nucleolin to the apical cell surface where it can bind fusion glycoprotein F1. Later in infection, F protein expressed at the plasma membrane of infected cells can mediate fusion with adjacent cells to form syncytia, a cytopathic effect that could lead to tissue necrosis. F protein seems to trigger p53-dependent apoptosis. This chain is Fusion glycoprotein F0 (F), found in Human respiratory syncytial virus B (strain B1).